A 672-amino-acid chain; its full sequence is Serine/threonine-protein kinase ppk16 (672 aa).

Residues 31 to 279 (YRIESVVGEG…IDQIISHPYF (249 aa)) enclose the Protein kinase domain. Residues 37–45 (VGEGSFGKV) and lysine 60 each bind ATP. Aspartate 148 acts as the Proton acceptor in catalysis. Serine 231 is modified (phosphoserine). Polar residues predominate over residues 375–384 (VSVMSNNQDS). Disordered stretches follow at residues 375-396 (VSVM…DSSN), 416-436 (DTLS…ENYL), 464-572 (NSFG…YSNV), and 632-672 (SGRK…TDLL). Polar residues predominate over residues 472–487 (NLPQTTHVDTGEQNTP). Residues 508–523 (SNSQNSPSKSSNLSIN) are compositionally biased toward low complexity. Polar residues predominate over residues 531-541 (LQNTVISPQPT). Low complexity-rich tracts occupy residues 549-572 (RSLS…YSNV) and 639-649 (SSSSLMFNQSS).

It belongs to the protein kinase superfamily. Ser/Thr protein kinase family.

The protein localises to the cytoplasm. It carries out the reaction L-seryl-[protein] + ATP = O-phospho-L-seryl-[protein] + ADP + H(+). The enzyme catalyses L-threonyl-[protein] + ATP = O-phospho-L-threonyl-[protein] + ADP + H(+). In terms of biological role, has a role in meiosis. The protein is Serine/threonine-protein kinase ppk16 (ppk16) of Schizosaccharomyces pombe (strain 972 / ATCC 24843) (Fission yeast).